The sequence spans 169 residues: MDLNAIRILGLDPGLRRTGWGVIDVTGSRLAFVACGTILPPEQAPMGERLAHLHRELLGVIERFSPQEAAVEETFVNMNPSSTLKLGQARGVVLLAPAQMGLPVAEYAALLVKKSVVGAGRAEKAQVRMMIGILLPKATPETEDASDALAVAVTHAHHRGAAARARAAL.

Active-site residues include aspartate 12, glutamate 72, and aspartate 144. The Mg(2+) site is built by aspartate 12, glutamate 72, and aspartate 144.

Belongs to the RuvC family. Homodimer which binds Holliday junction (HJ) DNA. The HJ becomes 2-fold symmetrical on binding to RuvC with unstacked arms; it has a different conformation from HJ DNA in complex with RuvA. In the full resolvosome a probable DNA-RuvA(4)-RuvB(12)-RuvC(2) complex forms which resolves the HJ. Mg(2+) is required as a cofactor.

The protein localises to the cytoplasm. It carries out the reaction Endonucleolytic cleavage at a junction such as a reciprocal single-stranded crossover between two homologous DNA duplexes (Holliday junction).. In terms of biological role, the RuvA-RuvB-RuvC complex processes Holliday junction (HJ) DNA during genetic recombination and DNA repair. Endonuclease that resolves HJ intermediates. Cleaves cruciform DNA by making single-stranded nicks across the HJ at symmetrical positions within the homologous arms, yielding a 5'-phosphate and a 3'-hydroxyl group; requires a central core of homology in the junction. The consensus cleavage sequence is 5'-(A/T)TT(C/G)-3'. Cleavage occurs on the 3'-side of the TT dinucleotide at the point of strand exchange. HJ branch migration catalyzed by RuvA-RuvB allows RuvC to scan DNA until it finds its consensus sequence, where it cleaves and resolves the cruciform DNA. The protein is Crossover junction endodeoxyribonuclease RuvC of Xanthobacter autotrophicus (strain ATCC BAA-1158 / Py2).